Consider the following 496-residue polypeptide: Cobyric acid synthase (496 aa).

Residues 252–442 form the GATase cobBQ-type domain; that stretch reads DLAVAVIRLP…LHGCFDSDTY (191 aa). Catalysis depends on Cys333, which acts as the Nucleophile. His434 is a catalytic residue.

This sequence belongs to the CobB/CobQ family. CobQ subfamily.

It participates in cofactor biosynthesis; adenosylcobalamin biosynthesis. Catalyzes amidations at positions B, D, E, and G on adenosylcobyrinic A,C-diamide. NH(2) groups are provided by glutamine, and one molecule of ATP is hydrogenolyzed for each amidation. The sequence is that of Cobyric acid synthase from Desulforudis audaxviator (strain MP104C).